The sequence spans 79 residues: MTVDNNVLDLRKLRCPEPIMLLRKKIREIKNGTTLLILSDDPSTIREIPQYCKFMHHKLLKINTKDTIYKFWIQKTHKM.

The active-site Cysteine persulfide intermediate is the C15.

It belongs to the sulfur carrier protein TusA family. As to quaternary structure, interacts with IscS.

The protein localises to the cytoplasm. Its pathway is tRNA modification. In terms of biological role, sulfur carrier protein involved in sulfur trafficking in the cell. Part of a sulfur-relay system required for 2-thiolation during synthesis of 2-thiouridine of the modified wobble base 5-methylaminomethyl-2-thiouridine (mnm(5)s(2)U) in tRNA. Interacts with IscS and stimulates its cysteine desulfurase activity. Accepts an activated sulfur from IscS, which is then transferred to TusD, and thus determines the direction of sulfur flow from IscS to 2-thiouridine formation. Also appears to be involved in sulfur transfer for the biosynthesis of molybdopterin. This is Sulfur carrier protein TusA from Buchnera aphidicola subsp. Baizongia pistaciae (strain Bp).